A 132-amino-acid polypeptide reads, in one-letter code: Fluoride-specific ion channel FluC 1 (132 aa).

Transmembrane regions (helical) follow at residues 11-31 (AVFA…ALAI), 37-57 (WPWP…YFTT), 70-92 (RPLL…VETI), and 105-125 (AYSV…TVLV). Residues glycine 79 and threonine 82 each contribute to the Na(+) site.

It belongs to the fluoride channel Fluc/FEX (TC 1.A.43) family.

The protein resides in the cell membrane. It catalyses the reaction fluoride(in) = fluoride(out). Its activity is regulated as follows. Na(+) is not transported, but it plays an essential structural role and its presence is essential for fluoride channel function. Functionally, fluoride-specific ion channel. Important for reducing fluoride concentration in the cell, thus reducing its toxicity. The polypeptide is Fluoride-specific ion channel FluC 1 (Mycobacterium bovis (strain ATCC BAA-935 / AF2122/97)).